A 359-amino-acid polypeptide reads, in one-letter code: tRNA-specific 2-thiouridylase MnmA (359 aa).

ATP-binding positions include alanine 6–serine 13 and leucine 32. The active-site Nucleophile is the cysteine 97. An intrachain disulfide couples cysteine 97 to cysteine 195. Residue glycine 121 coordinates ATP. The segment at lysine 144–glutamine 146 is interaction with tRNA. The active-site Cysteine persulfide intermediate is cysteine 195.

The protein belongs to the MnmA/TRMU family.

Its subcellular location is the cytoplasm. It carries out the reaction S-sulfanyl-L-cysteinyl-[protein] + uridine(34) in tRNA + AH2 + ATP = 2-thiouridine(34) in tRNA + L-cysteinyl-[protein] + A + AMP + diphosphate + H(+). Its function is as follows. Catalyzes the 2-thiolation of uridine at the wobble position (U34) of tRNA, leading to the formation of s(2)U34. The chain is tRNA-specific 2-thiouridylase MnmA from Tropheryma whipplei (strain TW08/27) (Whipple's bacillus).